The following is a 190-amino-acid chain: MVITRNMKARATSVSHRQSQQDPESPVKKFFKLVLPSTMKDKMMRIPPRFVKLQGSKLSEVVTLVTPAGYKRSIKLKRIGEEIWFHEGWSEFAEAHSIEEGHFLLFEYKKNSSFRVIIFNASACETNYPLDAVHIIDSDDDVIEITGKEFDTEHKSKKRPRDIEFDKILHDVDVMQVLKEEEEDKRVLRG.

The tract at residues 1–25 (MVITRNMKARATSVSHRQSQQDPES) is disordered. The segment covering 12–23 (TSVSHRQSQQDP) has biased composition (polar residues). The TF-B3 DNA-binding region spans 29-122 (KFFKLVLPST…SFRVIIFNAS (94 aa)).

The protein resides in the nucleus. This Arabidopsis thaliana (Mouse-ear cress) protein is B3 domain-containing protein At4g01580.